The following is a 414-amino-acid chain: Transcriptional repressor protein YY1 (414 aa).

Residues 1–170 are interaction with the SMAD1/SMAD4 complex; the sequence is MASGDTLYIA…GGGSSSSGGG (170 aa). The tract at residues 33-81 is disordered; it reads VETIETTVVGEEEEEDDDDEDGGGGDHGGGGGHGHAGHHHHHHHHHHHP. The span at 42–55 shows a compositional bias: acidic residues; sequence GEEEEEDDDDEDGG. A compositionally biased stretch (gly residues) spans 57-66; the sequence is GDHGGGGGHG. Over residues 67-81 the composition is skewed to basic residues; the sequence is HAGHHHHHHHHHHHP. The interval 116–260 is gly-rich region involved in interaction with HCFC1; that stretch reads DDSDGLRAED…YSEYMTGKKL (145 aa). Position 118 is a phosphoserine; by CK2 (S118). Positions 157–203 are disordered; the sequence is GKSGGGGSSSSGGGRVKKGGGKKSGKKSYLSGGAGAAGGGGADPGNK. The span at 158 to 170 shows a compositional bias: gly residues; sequence KSGGGGSSSSGGG. Basic residues predominate over residues 171-182; sequence RVKKGGGKKSGK. Glycyl lysine isopeptide (Lys-Gly) (interchain with G-Cter in SUMO2) cross-links involve residues K182 and K183. S187 bears the Phosphoserine mark. The segment covering 188 to 199 has biased composition (gly residues); it reads GGAGAAGGGGAD. Glycyl lysine isopeptide (Lys-Gly) (interchain with G-Cter in SUMO2) cross-links involve residues K208 and K230. Position 247 is a phosphoserine (S247). Residues 257-341 are involved in nuclear matrix association; the sequence is GKKLPPGGIP…KAFVESSKLK (85 aa). Glycyl lysine isopeptide (Lys-Gly) (interchain with G-Cter in SUMO2) cross-links involve residues K286 and K288. A binding to DNA region spans residues 295 to 414; the sequence is TIACPHKGCT…LTHAKAKNNQ (120 aa). 3 C2H2-type zinc fingers span residues 296–320, 325–347, and 353–377; these read IACPHKGCTKMFRDNSAMRKHLHTH, HVCAECGKAFVESSKLKRHQLVH, and FQCTFEGCGKRFSLDFNLRTHVRIH. 12 residues coordinate Zn(2+): C298, C303, H316, H320, C327, C330, H343, H347, C355, C360, H373, and H377. Residues 333–371 form an involved in repression of activated transcription region; sequence AFVESSKLKRHQLVHTGEKPFQCTFEGCGKRFSLDFNLR. The segment at 371-397 is involved in masking transactivation domain; the sequence is RTHVRIHTGDRPYVCPFDGCNKKFAQS. T378 is modified (phosphothreonine). A C2H2-type 4 zinc finger spans residues 383–407; that stretch reads YVCPFDGCNKKFAQSTNLKSHILTH. The Zn(2+) site is built by C385, C390, H403, and H407. Glycyl lysine isopeptide (Lys-Gly) (interchain with G-Cter in SUMO2) cross-links involve residues K409 and K411.

Belongs to the YY transcription factor family. Interacts with YAF2 through the region encompassing the first and second zinc fingers. Component of the chromatin remodeling INO80 complex; specifically part of a complex module associated with the DBINO domain of INO80. Interacts with EED and EZH2; the interactions are indicative for an association with the PRC2/EED-EZH2 complex. Interacts with SFMBT2. Found in a complex with SMAD1 and SMAD4. Found in a complex with YY1, SIN3A and HDAC1. Accessory component of the polycomb repressive deubiquitinase (PR-DUB) complex, at least composed of BAP1, one of ASXL1, ASXL2 or (probably) ASXL3 and one of MBD5 or MBD6; the PR-DUB core associates with a number of accessory proteins, including FOXK1, FOXK2, KDM1B, HCFC1, YY1 and OGT. Interacts (via Gly-rich region) with HCFC1; the interaction is direct. Interacts (via C-terminal zinc-finger domains) with BAP1 (via ULD domain); the interaction is direct and requires HCFC1. In terms of processing, phosphorylation at Ser-118 by CK2 prevents proteolytic cleavage by caspase-7 (CASP7) during apoptosis. Post-translationally, proteolytically cleaved by caspase-7 (CASP7) in response to apoptosis. Phosphorylation at Ser-118 protects against proteolytic cleavage. Transiently poly-ADP-ribosylated by PARP1 upon DNA damage, with the effect of decreasing affinity of YY1 to its cognate DNA binding sites. In terms of processing, ubiquitinated.

The protein localises to the nucleus matrix. Functionally, multifunctional transcription factor that exhibits positive and negative control on a large number of cellular and viral genes by binding to sites overlapping the transcription start site. Binds to the consensus sequence 5'-CCGCCATNTT-3'; some genes have been shown to contain a longer binding motif allowing enhanced binding; the initial CG dinucleotide can be methylated greatly reducing the binding affinity. The effect on transcription regulation is depending upon the context in which it binds and diverse mechanisms of action include direct activation or repression, indirect activation or repression via cofactor recruitment, or activation or repression by disruption of binding sites or conformational DNA changes. Its activity is regulated by transcription factors and cytoplasmic proteins that have been shown to abrogate or completely inhibit YY1-mediated activation or repression. For example, it acts as a repressor in absence of adenovirus E1A protein but as an activator in its presence. Acts synergistically with the SMAD1 and SMAD4 in bone morphogenetic protein (BMP)-mediated cardiac-specific gene expression. Binds to SMAD binding elements (SBEs) (5'-GTCT/AGAC-3') within BMP response element (BMPRE) of cardiac activating regions. May play an important role in development and differentiation. Proposed to recruit the PRC2/EED-EZH2 complex to target genes that are transcriptional repressed. Involved in DNA repair. In vitro, binds to DNA recombination intermediate structures (Holliday junctions). Plays a role in regulating enhancer activation. Recruits the PR-DUB complex to specific gene-regulatory regions. Its function is as follows. Proposed core component of the chromatin remodeling INO80 complex which is involved in transcriptional regulation, DNA replication and probably DNA repair; proposed to target the INO80 complex to YY1-responsive elements. The polypeptide is Transcriptional repressor protein YY1 (YY1) (Homo sapiens (Human)).